We begin with the raw amino-acid sequence, 623 residues long: MSTQDERQINTEYAVSLLEQLKLFYEQQLFTDIVLIVEGTEFPCHKMVLATCSSYFRAMFMSGLSESKQTHVHLRNVDAATLQIIITYAYTGNLAMNDSTVEQLYETACFLQVEDVLQRCREYLIKKINAENCVRLLSFADLFSCEELKQSAKRMVEHKFTAVYHQDAFMQLSHDLLIDILSSDNLNVEKEETVREAAMLWLEYNTESRSQYLSSVLSQIRIDALSEVTQRAWFQGLPPNDKSVVVQGLYKSMPKFFKPRLGMTKEEMMIFIEASSENPCSLYSSVCYSPQAEKVYKLCSPPADLHKVGTVVTPDNDIYIAGGQVPLKNTKTNHSKTSKLQTAFRTVNCFYWFDAQQNTWFPKTPMLFVRIKPSLVCCEGYIYAIGGDSVGGELNRRTVERYDTEKDEWTMVSPLPCAWQWSAAVVVHDCIYVMTLNLMYCYFPRSDSWVEMAMRQTSRSFASAAAFGDKIFYIGGLHIATNSGIRLPSGTVDGSSVTVEIYDVNKNEWKMAANIPAKRYSDPCVRAVVISNSLCVFMRETHLNERAKYVTYQYDLELDRWSLRQHISERVLWDLGRDFRCTVGKLYPSCLEESPWKPPTYLFSTDGTEEFELDGEMVALPPV.

The region spanning 31-98 (TDIVLIVEGT…AYTGNLAMND (68 aa)) is the BTB domain. One can recognise a BACK domain in the interval 133–229 (CVRLLSFADL…IRIDALSEVT (97 aa)). Ser-300 carries the post-translational modification Phosphoserine. Kelch repeat units lie at residues 317–380 (DIYI…CCEG), 381–429 (YIYA…VVHD), 431–469 (IYVM…AFGD), 470–529 (KIFY…RAVV), and 535–581 (CVFM…DFRC).

As to quaternary structure, component of the BCR(KBTBD2) E3 ubiquitin ligase complex, at least composed of CUL3, KBTBD2 and RBX1. Interacts (via the BTB domain) with CUL3.

It functions in the pathway protein modification; protein ubiquitination. Its function is as follows. Substrate-specific adapter of a BCR (BTB-CUL3-RBX1) E3 ubiquitin ligase complex that acts as a regulator of the insulin signaling pathway, modulating insulin sensitivity by limiting PIK3R1/p85alpha abundance in adipocytes. Targets PIK3R1, the regulatory subunit of phosphatidylinositol 3-kinase (PI3K), for 'Lys-48'-linked polyubiquitination and proteasome-mediated degradation. This chain is Kelch repeat and BTB domain-containing protein 2, found in Homo sapiens (Human).